The primary structure comprises 343 residues: Protein RecA (343 aa).

65–72 (GPESSGKT) contacts ATP.

Belongs to the RecA family.

It is found in the cytoplasm. In terms of biological role, can catalyze the hydrolysis of ATP in the presence of single-stranded DNA, the ATP-dependent uptake of single-stranded DNA by duplex DNA, and the ATP-dependent hybridization of homologous single-stranded DNAs. It interacts with LexA causing its activation and leading to its autocatalytic cleavage. This chain is Protein RecA, found in Campylobacter jejuni subsp. jejuni serotype O:6 (strain 81116 / NCTC 11828).